Consider the following 432-residue polypeptide: Adenylosuccinate synthetase (432 aa).

Residues 13 to 19 and 41 to 43 contribute to the GTP site; these read GDEGKGK and GHT. Asp-14 serves as the catalytic Proton acceptor. Asp-14 and Gly-41 together coordinate Mg(2+). IMP is bound by residues 14-17, 39-42, Thr-130, Arg-144, Gln-225, Thr-240, and Arg-304; these read DEGK and NAGH. Catalysis depends on His-42, which acts as the Proton donor. 300–306 provides a ligand contact to substrate; the sequence is AVTGRPR. GTP is bound by residues Arg-306, 332-334, and 415-417; these read KLD and STG.

This sequence belongs to the adenylosuccinate synthetase family. As to quaternary structure, homodimer. Mg(2+) is required as a cofactor.

The protein localises to the cytoplasm. The enzyme catalyses IMP + L-aspartate + GTP = N(6)-(1,2-dicarboxyethyl)-AMP + GDP + phosphate + 2 H(+). It functions in the pathway purine metabolism; AMP biosynthesis via de novo pathway; AMP from IMP: step 1/2. Functionally, plays an important role in the de novo pathway of purine nucleotide biosynthesis. Catalyzes the first committed step in the biosynthesis of AMP from IMP. The chain is Adenylosuccinate synthetase from Haemophilus influenzae (strain ATCC 51907 / DSM 11121 / KW20 / Rd).